The primary structure comprises 482 residues: Cardiolipin synthase (482 aa).

2 helical membrane-spanning segments follow: residues 4–24 and 34–54; these read LAYLLVILLILNVFFAAVTVF and WAWLLVLTFVPIFGFIIYLIF. 2 consecutive PLD phosphodiesterase domains span residues 217–244 and 395–422; these read LNYRNHRKLAIIDGDVGYIGGFNIGDEY and DNGFIHAKTLVVDGEIASVGTANMDFRS. Active-site residues include His222, Lys224, Asp229, His400, Lys402, and Asp407.

Belongs to the phospholipase D family. Cardiolipin synthase subfamily.

It localises to the cell membrane. The enzyme catalyses 2 a 1,2-diacyl-sn-glycero-3-phospho-(1'-sn-glycerol) = a cardiolipin + glycerol. Its function is as follows. Catalyzes the reversible phosphatidyl group transfer from one phosphatidylglycerol molecule to another to form cardiolipin (CL) (diphosphatidylglycerol) and glycerol. This Listeria innocua serovar 6a (strain ATCC BAA-680 / CLIP 11262) protein is Cardiolipin synthase (cls).